We begin with the raw amino-acid sequence, 259 residues long: Protein snail homolog Sna (259 aa).

The SNAG domain stretch occupies residues 1–20 (MPRSFLVKKHFSASKKPNYS). The segment at 71 to 113 (DYKKSPISPSSSDDSSKPLDLTSFSSEDEGGKTSDPPSPASSA) is disordered. 5 C2H2-type zinc fingers span residues 119–141 (FQCN…KQLH), 150–172 (FSCK…IRSH), 176–198 (CVCK…IRTH), 204–226 (FSCT…LQTH), and 232–255 (YQCK…ETGC).

It belongs to the snail C2H2-type zinc-finger protein family. As to quaternary structure, interacts (via SNAG domain) with limd1 (via LIM domains), wtip (via LIM domains) and ajuba (via LIM domains). Interacts with elp3; the interaction inhibits snai1 ubiquitination and promotes snai1 stability. In terms of processing, ubiquitinated. In terms of tissue distribution, maternal expression is nearly completely restricted to the vegetal hemisphere. Zygotic expression begins in the dorsal marginal zone just before gastrulation (stage 9), and is almost completely absent in the animal hemisphere. At mid-gastrula (stage 11-11.5), expression begins in the ectoderm in an arc surrounding the prospective neural plate. From stage 12, anterior expression is down-regulated, while levels are increased in the prospective neural crest.

The protein localises to the nucleus. In terms of biological role, transcriptional repressor. Acts upstream of snai2/slug, zic5 and other neural crest markers in the specification of the neural crest and neural crest migration. Involved in embryonic mesoderm formation. The sequence is that of Protein snail homolog Sna (snai1) from Xenopus laevis (African clawed frog).